Reading from the N-terminus, the 386-residue chain is Transcription factor GTE1 (386 aa).

2 disordered regions span residues 66–106 and 340–386; these read GAAQ…KHVS and ANKS…AKKA. The segment covering 68 to 78 has biased composition (polar residues); it reads AQTNTSKSNSG. The Bromo domain occupies 105–211; that stretch reads VSSPDLMRQF…EKFEEKWLLI (107 aa). In terms of domain architecture, NET spans 263 to 344; sequence RESVVQRCRK…EALKAANKSS (82 aa). The span at 345–358 shows a compositional bias: low complexity; it reads GGTNAQNNNNTGTG.

In terms of tissue distribution, barely detectable in stems, leaves, siliques, and dry seeds, but was present at considerable levels in roots, flowers and imbibited seeds.

The protein resides in the nucleus. Transcription activator that plays a role in the promotion of seed germination by both negatively and positively regulating the abscisic acid (ABA) and phytochrome A (phyA) transduction pathways, respectively. In Arabidopsis thaliana (Mouse-ear cress), this protein is Transcription factor GTE1 (GTE1).